Here is a 383-residue protein sequence, read N- to C-terminus: TnpB-like protein ORF383B (383 aa).

Residues cysteine 328, cysteine 331, cysteine 345, and cysteine 348 each coordinate Zn(2+).

In the N-terminal section; belongs to the transposase 2 family. The protein in the C-terminal section; belongs to the transposase 35 family.

This chain is TnpB-like protein ORF383B, found in Acidianus convivator (ATV).